A 178-amino-acid chain; its full sequence is 3-hydroxyacyl-[acyl-carrier-protein] dehydratase FabZ (178 aa).

The active site involves His-54.

This sequence belongs to the thioester dehydratase family. FabZ subfamily.

The protein resides in the cytoplasm. It carries out the reaction a (3R)-hydroxyacyl-[ACP] = a (2E)-enoyl-[ACP] + H2O. In terms of biological role, involved in unsaturated fatty acids biosynthesis. Catalyzes the dehydration of short chain beta-hydroxyacyl-ACPs and long chain saturated and unsaturated beta-hydroxyacyl-ACPs. This Yersinia enterocolitica protein is 3-hydroxyacyl-[acyl-carrier-protein] dehydratase FabZ.